The primary structure comprises 310 residues: MSQPIVVAALYKFVTLEDYVELRDPLLKAMTDNGVKGTLLLANEGINGTVSATREGIDALLAWLRNDPRLVDVDHKESYCDEQPFYRTKVKLKKEIVTLGVPGVDPNKAVGTYVDPKDWNALISDPEVLLIDTRNDYEVAIGTFKGAIDPKTETFREFPDYIKANFDPSKHKKVAMFCTGGIRCEKASSYMLGEGFEAVYHLKGGILKYFEEVAQEESLWDGDCFVFDNRVTVRHDLSEGEYDQCHACRHPIDVKDRESEHYSPGVSCPHCWDTLSEKTRRSAIDRQKQIELAKARNQPHPIGYNYKAEA.

Residues 124–218 (SDPEVLLIDT…YFEEVAQEES (95 aa)) enclose the Rhodanese domain. The active-site Cysteine persulfide intermediate is the C178.

This sequence belongs to the TrhO family.

It catalyses the reaction uridine(34) in tRNA + AH2 + O2 = 5-hydroxyuridine(34) in tRNA + A + H2O. Functionally, catalyzes oxygen-dependent 5-hydroxyuridine (ho5U) modification at position 34 in tRNAs. The sequence is that of tRNA uridine(34) hydroxylase from Pseudomonas entomophila (strain L48).